The sequence spans 266 residues: Hydroxyethylthiazole kinase (266 aa).

Met43 contributes to the substrate binding site. Residues Arg119 and Thr166 each contribute to the ATP site. A substrate-binding site is contributed by Gly193.

This sequence belongs to the Thz kinase family. The cofactor is Mg(2+).

The catalysed reaction is 5-(2-hydroxyethyl)-4-methylthiazole + ATP = 4-methyl-5-(2-phosphooxyethyl)-thiazole + ADP + H(+). It functions in the pathway cofactor biosynthesis; thiamine diphosphate biosynthesis; 4-methyl-5-(2-phosphoethyl)-thiazole from 5-(2-hydroxyethyl)-4-methylthiazole: step 1/1. Functionally, catalyzes the phosphorylation of the hydroxyl group of 4-methyl-5-beta-hydroxyethylthiazole (THZ). This chain is Hydroxyethylthiazole kinase, found in Methanococcus maripaludis (strain C6 / ATCC BAA-1332).